We begin with the raw amino-acid sequence, 263 residues long: N-acyl homoserine lactonase AttM (263 aa).

7 residues coordinate Zn(2+): histidine 103, histidine 105, aspartate 107, histidine 108, histidine 180, aspartate 202, and histidine 247.

Belongs to the metallo-beta-lactamase superfamily. The cofactor is Zn(2+).

It carries out the reaction an N-acyl-L-homoserine lactone + H2O = an N-acyl-L-homoserine + H(+). In Rhizobium radiobacter (Agrobacterium tumefaciens), this protein is N-acyl homoserine lactonase AttM (attM).